Reading from the N-terminus, the 83-residue chain is Cytochrome b559 subunit alpha (83 aa).

A helical membrane pass occupies residues Ile21–Trp35. Position 23 (His23) interacts with heme.

In terms of assembly, heterodimer of an alpha subunit and a beta subunit. PSII is composed of 1 copy each of membrane proteins PsbA, PsbB, PsbC, PsbD, PsbE, PsbF, PsbH, PsbI, PsbJ, PsbK, PsbL, PsbM, PsbT, PsbX, PsbY, PsbZ, Psb30/Ycf12, at least 3 peripheral proteins of the oxygen-evolving complex and a large number of cofactors. It forms dimeric complexes. Requires heme b as cofactor.

It localises to the plastid. Its subcellular location is the chloroplast thylakoid membrane. This b-type cytochrome is tightly associated with the reaction center of photosystem II (PSII). PSII is a light-driven water:plastoquinone oxidoreductase that uses light energy to abstract electrons from H(2)O, generating O(2) and a proton gradient subsequently used for ATP formation. It consists of a core antenna complex that captures photons, and an electron transfer chain that converts photonic excitation into a charge separation. This chain is Cytochrome b559 subunit alpha, found in Pisum sativum (Garden pea).